The following is a 122-amino-acid chain: Large ribosomal subunit protein uL14 (122 aa).

It belongs to the universal ribosomal protein uL14 family. As to quaternary structure, part of the 50S ribosomal subunit. Forms a cluster with proteins L3 and L19. In the 70S ribosome, L14 and L19 interact and together make contacts with the 16S rRNA in bridges B5 and B8.

In terms of biological role, binds to 23S rRNA. Forms part of two intersubunit bridges in the 70S ribosome. This Flavobacterium johnsoniae (strain ATCC 17061 / DSM 2064 / JCM 8514 / BCRC 14874 / CCUG 350202 / NBRC 14942 / NCIMB 11054 / UW101) (Cytophaga johnsonae) protein is Large ribosomal subunit protein uL14.